Reading from the N-terminus, the 221-residue chain is Probable septum site-determining protein MinC (221 aa).

This sequence belongs to the MinC family. Interacts with MinD and FtsZ.

In terms of biological role, cell division inhibitor that blocks the formation of polar Z ring septums. Rapidly oscillates between the poles of the cell to destabilize FtsZ filaments that have formed before they mature into polar Z rings. Prevents FtsZ polymerization. The chain is Probable septum site-determining protein MinC from Shewanella sp. (strain ANA-3).